A 397-amino-acid polypeptide reads, in one-letter code: Succinate--CoA ligase [ADP-forming] subunit beta (397 aa).

Residues 9–254 (KALLKGYGAP…ETEEDAKEIE (246 aa)) form the ATP-grasp domain. Residues K46, 53–55 (GRG), E109, A112, and E117 each bind ATP. Residues N209 and D223 each coordinate Mg(2+). Substrate contacts are provided by residues N274 and 331 to 333 (GIM).

Belongs to the succinate/malate CoA ligase beta subunit family. Heterotetramer of two alpha and two beta subunits. It depends on Mg(2+) as a cofactor.

It carries out the reaction succinate + ATP + CoA = succinyl-CoA + ADP + phosphate. It catalyses the reaction GTP + succinate + CoA = succinyl-CoA + GDP + phosphate. It functions in the pathway carbohydrate metabolism; tricarboxylic acid cycle; succinate from succinyl-CoA (ligase route): step 1/1. In terms of biological role, succinyl-CoA synthetase functions in the citric acid cycle (TCA), coupling the hydrolysis of succinyl-CoA to the synthesis of either ATP or GTP and thus represents the only step of substrate-level phosphorylation in the TCA. The beta subunit provides nucleotide specificity of the enzyme and binds the substrate succinate, while the binding sites for coenzyme A and phosphate are found in the alpha subunit. The polypeptide is Succinate--CoA ligase [ADP-forming] subunit beta (Rhizobium leguminosarum bv. trifolii (strain WSM2304)).